The chain runs to 58 residues: Large ribosomal subunit protein uL30 (58 aa).

It belongs to the universal ribosomal protein uL30 family. Part of the 50S ribosomal subunit.

The chain is Large ribosomal subunit protein uL30 from Phocaeicola vulgatus (strain ATCC 8482 / DSM 1447 / JCM 5826 / CCUG 4940 / NBRC 14291 / NCTC 11154) (Bacteroides vulgatus).